The chain runs to 32 residues: MSDIN-like toxin proprotein 1 (32 aa).

A propeptide spanning residues 1–10 (MSDINATCLP) is cleaved from the precursor. The segment at residues 11 to 17 (AWLALCP) is a cross-link (cyclopeptide (Ala-Pro)). The propeptide occupies 18-32 (CVGDDVNPTLTRGGT).

It belongs to the MSDIN fungal toxin family. In terms of processing, processed by the macrocyclase-peptidase enzyme POPB to yield a toxic cyclic heptapeptide. POPB first removes 10 residues from the N-terminus. Conformational trapping of the remaining peptide forces the enzyme to release this intermediate rather than proceed to macrocyclization. The enzyme rebinds the remaining peptide in a different conformation and catalyzes macrocyclization of the N-terminal 7 residues.

Probable toxin that belongs to the MSDIN-like toxin family responsible for a large number of food poisoning cases and deaths. The polypeptide is MSDIN-like toxin proprotein 1 (Amanita fuligineoides).